A 444-amino-acid chain; its full sequence is Methylenetetrahydrofolate--tRNA-(uracil-5-)-methyltransferase TrmFO (444 aa).

9–14 (GAGMAG) contributes to the FAD binding site.

The protein belongs to the MnmG family. TrmFO subfamily. The cofactor is FAD.

The protein resides in the cytoplasm. It catalyses the reaction uridine(54) in tRNA + (6R)-5,10-methylene-5,6,7,8-tetrahydrofolate + NADH + H(+) = 5-methyluridine(54) in tRNA + (6S)-5,6,7,8-tetrahydrofolate + NAD(+). The catalysed reaction is uridine(54) in tRNA + (6R)-5,10-methylene-5,6,7,8-tetrahydrofolate + NADPH + H(+) = 5-methyluridine(54) in tRNA + (6S)-5,6,7,8-tetrahydrofolate + NADP(+). Functionally, catalyzes the folate-dependent formation of 5-methyl-uridine at position 54 (M-5-U54) in all tRNAs. The polypeptide is Methylenetetrahydrofolate--tRNA-(uracil-5-)-methyltransferase TrmFO (Cereibacter sphaeroides (strain KD131 / KCTC 12085) (Rhodobacter sphaeroides)).